The following is a 406-amino-acid chain: uncharacterized protein (406 aa).

Belongs to the mycobacterial PPE family.

This is an uncharacterized protein from Mycobacterium tuberculosis (strain CDC 1551 / Oshkosh).